The primary structure comprises 276 residues: Non-heme chloroperoxidase (276 aa).

Residues 24 to 254 (PVVFHHGWPL…NATLKSYEGL (231 aa)) enclose the AB hydrolase-1 domain. Active-site residues include S97, D227, and H256.

It belongs to the AB hydrolase superfamily. Bacterial non-heme haloperoxidase / perhydrolase family. In terms of assembly, homodimer.

The sequence is that of Non-heme chloroperoxidase (cpo) from Streptomyces lividans.